The following is a 162-amino-acid chain: Phosphopantetheine adenylyltransferase (162 aa).

Thr9 contacts substrate. ATP-binding positions include 9–10 and His17; that span reads TF. Substrate-binding residues include Lys41, Leu76, and Arg90. ATP-binding positions include 91–93, Glu101, and 126–132; these read GLR and HQAIASR.

The protein belongs to the bacterial CoaD family. Homohexamer. Requires Mg(2+) as cofactor.

It is found in the cytoplasm. The catalysed reaction is (R)-4'-phosphopantetheine + ATP + H(+) = 3'-dephospho-CoA + diphosphate. It functions in the pathway cofactor biosynthesis; coenzyme A biosynthesis; CoA from (R)-pantothenate: step 4/5. Its function is as follows. Reversibly transfers an adenylyl group from ATP to 4'-phosphopantetheine, yielding dephospho-CoA (dPCoA) and pyrophosphate. This Caulobacter sp. (strain K31) protein is Phosphopantetheine adenylyltransferase.